An 87-amino-acid polypeptide reads, in one-letter code: MARVTVEDCLEHVDNRFELVMLSTKRARQLATGGKEPRVAWENDKPTVVALREIAEGIVTNEFIAAEEIVTEDPVFAAFEDENNEAV.

The protein belongs to the RNA polymerase subunit omega family. The RNAP catalytic core consists of 2 alpha, 1 beta, 1 beta' and 1 omega subunit. When a sigma factor is associated with the core the holoenzyme is formed, which can initiate transcription.

The catalysed reaction is RNA(n) + a ribonucleoside 5'-triphosphate = RNA(n+1) + diphosphate. In terms of biological role, promotes RNA polymerase assembly. Latches the N- and C-terminal regions of the beta' subunit thereby facilitating its interaction with the beta and alpha subunits. The sequence is that of DNA-directed RNA polymerase subunit omega from Pseudomonas putida (strain ATCC 700007 / DSM 6899 / JCM 31910 / BCRC 17059 / LMG 24140 / F1).